The primary structure comprises 496 residues: Cytochrome P450 71D95 (496 aa).

The chain crosses the membrane as a helical; Signal-anchor span at residues 2–22 (ELQISSAIIILVATFVASLLI). Cys-436 serves as a coordination point for heme.

It belongs to the cytochrome P450 family. Heme is required as a cofactor.

It is found in the endoplasmic reticulum membrane. The catalysed reaction is (4S)-limonene + reduced [NADPH--hemoprotein reductase] + O2 = (1S,6R)-isopiperitenol + oxidized [NADPH--hemoprotein reductase] + H2O + H(+). Hydroxylates both (+)- and (-)-limonene to (+) and (-)-trans-isopiperitenol. This chain is Cytochrome P450 71D95 (CYP71D95), found in Mentha spicata (Spearmint).